Here is a 396-residue protein sequence, read N- to C-terminus: Elongation factor Tu (396 aa).

One can recognise a tr-type G domain in the interval 10-206 (KPHVNVGTIG…AVDAYIPTPQ (197 aa)). Positions 19–26 (GHVDHGKT) are G1. 19–26 (GHVDHGKT) is a binding site for GTP. A Mg(2+)-binding site is contributed by Thr-26. Positions 60 to 64 (GITIA) are G2. A G3 region spans residues 81 to 84 (DCPG). GTP contacts are provided by residues 81-85 (DCPGH) and 136-139 (NKVD). Residues 136–139 (NKVD) form a G4 region. The interval 174–176 (SAL) is G5.

This sequence belongs to the TRAFAC class translation factor GTPase superfamily. Classic translation factor GTPase family. EF-Tu/EF-1A subfamily. In terms of assembly, monomer.

It localises to the cytoplasm. It catalyses the reaction GTP + H2O = GDP + phosphate + H(+). GTP hydrolase that promotes the GTP-dependent binding of aminoacyl-tRNA to the A-site of ribosomes during protein biosynthesis. This is Elongation factor Tu from Anaeromyxobacter dehalogenans (strain 2CP-C).